Reading from the N-terminus, the 781-residue chain is uncharacterized protein (781 aa).

The interval 1-34 (MNIAEEPSDEVISSGPEDTDICSQQTSASAEAGD) is disordered. S29 carries the post-translational modification Phosphoserine. RRM domains are found at residues 195–273 (GNIF…YHVE) and 295–418 (RCLF…KAVQ). The tract at residues 345–375 (SNTRSSSSVSFNEEGSVESNKSSNNTNGNAQ) is disordered. The span at 347-364 (TRSSSSVSFNEEGSVESN) shows a compositional bias: low complexity. Over residues 365–374 (KSSNNTNGNA) the composition is skewed to polar residues. 4 positions are modified to phosphoserine: S433, S435, S482, and S485. Residue T486 is modified to Phosphothreonine. Phosphoserine is present on S501. Residues 540–638 (SNLYVKHIPL…QVLSVSFAQK (99 aa)) form the RRM 3 domain. A disordered region spans residues 640-668 (GNLSSSDDDDQSQTDNSSKFQNFQPHNDY).

As to quaternary structure, interacts with RBG1.

This is an uncharacterized protein from Saccharomyces cerevisiae (strain ATCC 204508 / S288c) (Baker's yeast).